A 343-amino-acid polypeptide reads, in one-letter code: Leucine-rich repeat-containing protein 23 (343 aa).

Residues 1–30 (MSDEDDLEDSEPDQDDSEKEEDEKETEEGE) are compositionally biased toward acidic residues. Residues 1-47 (MSDEDDLEDSEPDQDDSEKEEDEKETEEGEDYRKEGEEFPEEWLPTP) are disordered. 8 LRR repeats span residues 92 to 113 (HLRY…NYLT), 114 to 134 (HLLW…NELP), 135 to 155 (YLQI…ISHP), 156 to 177 (RLET…DPEK), 180 to 200 (SLHT…INLP), 201 to 222 (KLKN…EDLS), 223 to 244 (NLTT…SREM), and 246 to 267 (SLQY…AKLR). Positions 208–343 (AQNMLKKVEG…RDLEPEQSLI (136 aa)) are interaction with RSPH9. The LRRCT domain maps to 280 to 318 (NPCTDETSYRQEALVQMPYLERLDKEFYEEEERAEADVI). The stretch at 307–329 (YEEEERAEADVIRQRLKEEKEQE) forms a coiled coil. The span at 318–337 (IRQRLKEEKEQEPEPQRDLE) shows a compositional bias: basic and acidic residues. Residues 318–343 (IRQRLKEEKEQEPEPQRDLEPEQSLI) are disordered.

Component of the axonemal radial spoke complex. Interacts with RSPH3. Interacts with RSPH9. In terms of tissue distribution, expressed in spermatozoa.

It localises to the cell projection. The protein resides in the cilium. The protein localises to the flagellum. Its subcellular location is the cytoplasm. It is found in the cytoskeleton. It localises to the flagellum axoneme. Its function is as follows. Essential for sperm motility and male fertility. Plays an important role in the proper assembly of the third radial spoke (RS3) head and the bridge structure between RS2 and RS3 in the sperm flagella. This chain is Leucine-rich repeat-containing protein 23 (LRRC23), found in Homo sapiens (Human).